Here is a 245-residue protein sequence, read N- to C-terminus: tRNA pseudouridine synthase A 2 (245 aa).

Aspartate 53 functions as the Nucleophile in the catalytic mechanism. Tyrosine 111 is a binding site for substrate.

This sequence belongs to the tRNA pseudouridine synthase TruA family. In terms of assembly, homodimer.

The catalysed reaction is uridine(38/39/40) in tRNA = pseudouridine(38/39/40) in tRNA. Its function is as follows. Formation of pseudouridine at positions 38, 39 and 40 in the anticodon stem and loop of transfer RNAs. The chain is tRNA pseudouridine synthase A 2 from Bacillus cereus (strain ATCC 10987 / NRS 248).